Here is a 91-residue protein sequence, read N- to C-terminus: Teretoxin Tan22.13 (91 aa).

A signal peptide spans 1-21 (MKVQILFALMMVLVTLCLGQK). A propeptide spanning residues 22 to 24 (MQR) is cleaved from the precursor.

It belongs to the teretoxin C (TC) superfamily. Post-translationally, contains 4 disulfide bonds. Expressed by the venom duct.

It is found in the secreted. In Terebra anilis (Auger snail), this protein is Teretoxin Tan22.13.